Reading from the N-terminus, the 427-residue chain is Four-jointed box protein 1 (427 aa).

An N-terminal signal peptide occupies residues 1–18; sequence MRALSANLFAVLLMCALA. N81, N244, and N270 each carry an N-linked (GlcNAc...) asparagine glycan.

Its subcellular location is the secreted. Its function is as follows. May act as an inhibitor of dendrite extension and branching. The chain is Four-jointed box protein 1 (fjx1) from Xiphophorus maculatus (Southern platyfish).